A 213-amino-acid polypeptide reads, in one-letter code: Retinitis pigmentosa 9 protein homolog (213 aa).

Positions methionine 1–aspartate 61 are disordered. A PIM1-binding region spans residues methionine 1–valine 147. Composition is skewed to basic and acidic residues over residues arginine 9–arginine 21 and isoleucine 52–aspartate 61. The CCHC-type zinc finger occupies glutamine 96 to phenylalanine 114. Lysine 121 participates in a covalent cross-link: Glycyl lysine isopeptide (Lys-Gly) (interchain with G-Cter in SUMO2). Residues glutamine 154–glutamate 213 are disordered. Positions lysine 176–serine 204 are enriched in basic residues. Phosphoserine; by PIM1; in vitro occurs at positions 204 and 206.

In terms of assembly, binds to PIM1. Binds to ZNHIT4. As to expression, highly expressed in the testis, moderately in the kidney, liver and spleen, and weakly in the skeletal muscle and heart.

The protein localises to the nucleus. Is thought to be a target protein for the PIM1 kinase. May play some roles in B-cell proliferation in association with PIM1. This is Retinitis pigmentosa 9 protein homolog (rp9) from Mus musculus (Mouse).